Reading from the N-terminus, the 397-residue chain is Iron-sulfur cluster assembly SufBD family protein Mb1497 (397 aa).

This sequence belongs to the iron-sulfur cluster assembly SufBD family.

The polypeptide is Iron-sulfur cluster assembly SufBD family protein Mb1497 (Mycobacterium bovis (strain ATCC BAA-935 / AF2122/97)).